The sequence spans 346 residues: Annexin A1 (346 aa).

A2 is subject to N-acetylalanine. S5 bears the Phosphoserine; by TRPM7 mark. Residue Q19 forms an Isoglutamyl lysine isopeptide (Gln-Lys) (interchain with K-?) linkage. Y21 is subject to Phosphotyrosine; by EGFR. Residues S34 and S37 each carry the phosphoserine modification. At T41 the chain carries Phosphothreonine. Annexin repeat units follow at residues 42 to 113, 114 to 185, 197 to 269, and 273 to 344; these read FNPS…ALLK, TPAQ…SLAK, DLAD…VIVK, and SQPM…ALCG. N6-acetyllysine is present on K58. Ca(2+) contacts are provided by G59, V60, E62, K97, L100, E105, M127, G129, G131, T132, and E134. T136 carries the post-translational modification Phosphothreonine. Residues D171, G210, and R213 each contribute to the Ca(2+) site. K214 is covalently cross-linked (Glycyl lysine isopeptide (Lys-Gly) (interchain with G-Cter in SUMO1); alternate). A Glycyl lysine isopeptide (Lys-Gly) (interchain with G-Cter in SUMO2); alternate cross-link involves residue K214. G215 contacts Ca(2+). Residue K239 is modified to N6-acetyllysine. Residues D253, E255, and L256 each contribute to the Ca(2+) site. Residue K257 forms a Glycyl lysine isopeptide (Lys-Gly) (interchain with G-Cter in SUMO1) linkage. Residues E261, M286, G288, and G290 each contribute to the Ca(2+) site. K312 bears the N6-acetyllysine mark. C324 and C343 are oxidised to a cystine. Positions 328, 330, and 331 each coordinate Ca(2+). A Glycyl lysine isopeptide (Lys-Gly) (interchain with G-Cter in SUMO1) cross-link involves residue K332. E336 lines the Ca(2+) pocket.

This sequence belongs to the annexin family. Homodimer; non-covalently linked. Homodimer; linked by transglutamylation. Homodimers linked by transglutamylation are observed in placenta, but not in other tissues. Interacts with S100A11. Heterotetramer, formed by two molecules each of S100A11 and ANXA1. Interacts with DYSF. Interacts with EGFR. In terms of processing, phosphorylated by protein kinase C, EGFR and TRPM7. Phosphorylated in response to EGF treatment. Sumoylated. Post-translationally, proteolytically cleaved by cathepsin CTSG to release the active N-terminal peptide Ac2-26. Detected on surface epithelia and mucosal glands in nasal cavity, trachea, bronchi and bronchioles. Detected in blood vessel endothelial cells. Detected in neutrophils (at protein level).

The protein resides in the nucleus. It is found in the cytoplasm. The protein localises to the cell projection. It localises to the cilium. Its subcellular location is the basolateral cell membrane. The protein resides in the lateral cell membrane. It is found in the cell membrane. The protein localises to the apical cell membrane. It localises to the membrane. Its subcellular location is the endosome membrane. The protein resides in the secreted. It is found in the extracellular space. The protein localises to the early endosome. It localises to the cytoplasmic vesicle membrane. Its subcellular location is the extracellular exosome. The protein resides in the cytoplasmic vesicle. It is found in the secretory vesicle lumen. The protein localises to the phagocytic cup. Functionally, plays important roles in the innate immune response as effector of glucocorticoid-mediated responses and regulator of the inflammatory process. Has anti-inflammatory activity. Plays a role in glucocorticoid-mediated down-regulation of the early phase of the inflammatory response. Contributes to the adaptive immune response by enhancing signaling cascades that are triggered by T-cell activation, regulates differentiation and proliferation of activated T-cells. Promotes the differentiation of T-cells into Th1 cells and negatively regulates differentiation into Th2 cells. Has no effect on unstimulated T-cells. Negatively regulates hormone exocytosis via activation of the formyl peptide receptors and reorganization of the actin cytoskeleton. Has high affinity for Ca(2+) and can bind up to eight Ca(2+) ions. Displays Ca(2+)-dependent binding to phospholipid membranes. Plays a role in the formation of phagocytic cups and phagosomes. Plays a role in phagocytosis by mediating the Ca(2+)-dependent interaction between phagosomes and the actin cytoskeleton. Its function is as follows. Functions at least in part by activating the formyl peptide receptors and downstream signaling cascades. Promotes chemotaxis of granulocytes and monocytes via activation of the formyl peptide receptors. Promotes rearrangement of the actin cytoskeleton, cell polarization and cell migration. Promotes resolution of inflammation and wound healing. Acts via neutrophil N-formyl peptide receptors to enhance the release of CXCL2. This is Annexin A1 (ANXA1) from Bos taurus (Bovine).